A 688-amino-acid chain; its full sequence is Elongation factor G 2 (688 aa).

Positions 7-282 (DSIRNIGIIS…AVAAYLPSPR (276 aa)) constitute a tr-type G domain. Residues 16-23 (SHIDAGKT), 80-84 (DTPGH), and 134-137 (NKMD) each bind GTP.

The protein belongs to the TRAFAC class translation factor GTPase superfamily. Classic translation factor GTPase family. EF-G/EF-2 subfamily.

The protein localises to the cytoplasm. Its function is as follows. Catalyzes the GTP-dependent ribosomal translocation step during translation elongation. During this step, the ribosome changes from the pre-translocational (PRE) to the post-translocational (POST) state as the newly formed A-site-bound peptidyl-tRNA and P-site-bound deacylated tRNA move to the P and E sites, respectively. Catalyzes the coordinated movement of the two tRNA molecules, the mRNA and conformational changes in the ribosome. This chain is Elongation factor G 2, found in Geobacter metallireducens (strain ATCC 53774 / DSM 7210 / GS-15).